Consider the following 338-residue polypeptide: Glycerol-3-phosphate dehydrogenase [NAD(P)+] (338 aa).

Residues Ser-14, Tyr-15, His-35, and Lys-109 each contribute to the NADPH site. Sn-glycerol 3-phosphate contacts are provided by Lys-109, Gly-138, and Thr-140. NADPH is bound at residue Ala-142. Sn-glycerol 3-phosphate-binding residues include Lys-194, Asp-247, Ser-257, Arg-258, and Asn-259. Lys-194 acts as the Proton acceptor in catalysis. Arg-258 serves as a coordination point for NADPH. The NADPH site is built by Val-282 and Glu-284.

The protein belongs to the NAD-dependent glycerol-3-phosphate dehydrogenase family.

The protein resides in the cytoplasm. It catalyses the reaction sn-glycerol 3-phosphate + NAD(+) = dihydroxyacetone phosphate + NADH + H(+). The enzyme catalyses sn-glycerol 3-phosphate + NADP(+) = dihydroxyacetone phosphate + NADPH + H(+). Its pathway is membrane lipid metabolism; glycerophospholipid metabolism. In terms of biological role, catalyzes the reduction of the glycolytic intermediate dihydroxyacetone phosphate (DHAP) to sn-glycerol 3-phosphate (G3P), the key precursor for phospholipid synthesis. This is Glycerol-3-phosphate dehydrogenase [NAD(P)+] from Shewanella sp. (strain MR-4).